Consider the following 258-residue polypeptide: Aquaglyceroporin (258 aa).

Residues Met-1 to Glu-16 are Cytoplasmic-facing. A helical membrane pass occupies residues Phe-17–Val-37. Residues Pro-38–Arg-45 are Extracellular-facing. A helical membrane pass occupies residues Leu-46–Gly-66. Positions 67 and 70 each coordinate glycerol. The Cytoplasmic segment spans residues Ala-67–Gln-87. Residues Ile-88–Gly-108 traverse the membrane as a helical segment. Topologically, residues Leu-109–His-133 are extracellular. A helical membrane pass occupies residues Ile-134–Ser-154. Residues Val-155 to Ser-171 lie on the Cytoplasmic side of the membrane. A helical membrane pass occupies residues Ile-172 to Leu-192. Residues Gly-189, Phe-190, Asn-193, and Arg-196 each coordinate glycerol. The Extracellular segment spans residues Asn-193–Lys-217. A helical membrane pass occupies residues Cys-218–Tyr-238. Residues Asp-239–Ile-258 lie on the Cytoplasmic side of the membrane.

This sequence belongs to the MIP/aquaporin (TC 1.A.8) family.

It localises to the cell membrane. The enzyme catalyses H2O(in) = H2O(out). It carries out the reaction glycerol(in) = glycerol(out). The catalysed reaction is urea(in) = urea(out). Mediates water and glycerol transport across the cell membrane. Permeable to urea. Required for efficient progression of parasites through the liver stages. The sequence is that of Aquaglyceroporin from Plasmodium berghei (strain Anka).